Reading from the N-terminus, the 548-residue chain is Adenine deaminase (548 aa).

It belongs to the metallo-dependent hydrolases superfamily. Adenine deaminase family. It depends on Mn(2+) as a cofactor.

It carries out the reaction adenine + H2O + H(+) = hypoxanthine + NH4(+). The polypeptide is Adenine deaminase (Borreliella afzelii (strain PKo) (Borrelia afzelii)).